Consider the following 62-residue polypeptide: Large ribosomal subunit protein uL29 (62 aa).

The protein belongs to the universal ribosomal protein uL29 family.

The sequence is that of Large ribosomal subunit protein uL29 from Vesicomyosocius okutanii subsp. Calyptogena okutanii (strain HA).